Consider the following 197-residue polypeptide: Imidazoleglycerol-phosphate dehydratase (197 aa).

The protein belongs to the imidazoleglycerol-phosphate dehydratase family.

It is found in the cytoplasm. The enzyme catalyses D-erythro-1-(imidazol-4-yl)glycerol 3-phosphate = 3-(imidazol-4-yl)-2-oxopropyl phosphate + H2O. It functions in the pathway amino-acid biosynthesis; L-histidine biosynthesis; L-histidine from 5-phospho-alpha-D-ribose 1-diphosphate: step 6/9. The sequence is that of Imidazoleglycerol-phosphate dehydratase from Bradyrhizobium sp. (strain ORS 278).